A 355-amino-acid polypeptide reads, in one-letter code: 3-dehydroquinate synthase (355 aa).

Residues 71-76, 105-109, 129-130, K142, and K151 contribute to the NAD(+) site; these read EGEERK, GVVGD, and TS. Zn(2+)-binding residues include E184, H246, and H263.

This sequence belongs to the sugar phosphate cyclases superfamily. Dehydroquinate synthase family. It depends on Co(2+) as a cofactor. Zn(2+) serves as cofactor. The cofactor is NAD(+).

The protein resides in the cytoplasm. It catalyses the reaction 7-phospho-2-dehydro-3-deoxy-D-arabino-heptonate = 3-dehydroquinate + phosphate. Its pathway is metabolic intermediate biosynthesis; chorismate biosynthesis; chorismate from D-erythrose 4-phosphate and phosphoenolpyruvate: step 2/7. Functionally, catalyzes the conversion of 3-deoxy-D-arabino-heptulosonate 7-phosphate (DAHP) to dehydroquinate (DHQ). In Streptococcus pneumoniae (strain JJA), this protein is 3-dehydroquinate synthase.